The chain runs to 304 residues: MKQRFGKVAVLFGGSSAERDVSLMSGAAVLAALQGAGVDAHAFDPAERDLHILKEEGYDRVFIALHGRGGEDGTVQGALELMGIPYTGSGVMASALAMDKWRTKMVWLSCGLPTPRYAILDADSDFDAIARDLGLPIFVKPVHEGSSMGATKVTEAGQLRAAWELAARYDSLVIAEEFISGQELTAPFLDDRALPLVRIVAPDGNYDYQHKYFTDDTRYDCPCGLPQAEEEALQALILKSARVLGCRGWGRADLILTPEGRPYLLEMNTSPGMTGHSLVPMSARVAGMSFEALCLAILAGARLG.

In terms of domain architecture, ATP-grasp spans 104–299; it reads KMVWLSCGLP…FEALCLAILA (196 aa). An ATP-binding site is contributed by 130-185; the sequence is ARDLGLPIFVKPVHEGSSMGATKVTEAGQLRAAWELAARYDSLVIAEEFISGQELT. Asp253, Glu266, and Asn268 together coordinate Mg(2+).

It belongs to the D-alanine--D-alanine ligase family. Mg(2+) serves as cofactor. Requires Mn(2+) as cofactor.

It is found in the cytoplasm. It catalyses the reaction 2 D-alanine + ATP = D-alanyl-D-alanine + ADP + phosphate + H(+). It participates in cell wall biogenesis; peptidoglycan biosynthesis. Its function is as follows. Cell wall formation. The protein is D-alanine--D-alanine ligase of Azoarcus sp. (strain BH72).